The sequence spans 962 residues: Putative primase C962R (962 aa).

The region spanning 607–775 is the SF3 helicase domain; that stretch reads ELDARLWIMF…PDPNNSYEKK (169 aa). 636-643 is a binding site for ATP; sequence GGGCNGKT.

Belongs to the asfivirus helicase C962R family.

The polypeptide is Putative primase C962R (African swine fever virus (isolate Warthog/Namibia/Wart80/1980) (ASFV)).